Reading from the N-terminus, the 601-residue chain is uncharacterized protein (601 aa).

3 helical membrane passes run 74–94, 104–124, and 531–551; these read IFFF…VFSI, VSFL…PNDG, and LVLL…NYYY.

It localises to the endoplasmic reticulum membrane. This is an uncharacterized protein from Schizosaccharomyces pombe (strain 972 / ATCC 24843) (Fission yeast).